Consider the following 154-residue polypeptide: Small ribosomal subunit protein uS19B (154 aa).

Residue serine 63 is modified to Phosphoserine.

The protein belongs to the universal ribosomal protein uS19 family. In terms of assembly, component of the small ribosomal subunit (SSU). Mature yeast ribosomes consist of a small (40S) and a large (60S) subunit. The 40S small subunit contains 1 molecule of ribosomal RNA (18S rRNA) and at least 33 different proteins. The large 60S subunit contains 3 rRNA molecules (25S, 5.8S and 5S rRNA) and at least 46 different proteins.

It is found in the cytoplasm. The protein resides in the nucleus. Its subcellular location is the nucleolus. Functionally, component of the ribosome, a large ribonucleoprotein complex responsible for the synthesis of proteins in the cell. The small ribosomal subunit (SSU) binds messenger RNAs (mRNAs) and translates the encoded message by selecting cognate aminoacyl-transfer RNA (tRNA) molecules. The large subunit (LSU) contains the ribosomal catalytic site termed the peptidyl transferase center (PTC), which catalyzes the formation of peptide bonds, thereby polymerizing the amino acids delivered by tRNAs into a polypeptide chain. The nascent polypeptides leave the ribosome through a tunnel in the LSU and interact with protein factors that function in enzymatic processing, targeting, and the membrane insertion of nascent chains at the exit of the ribosomal tunnel. uS19 is involved in the nuclear export of the small ribosomal subunit precursor. Has a role in the late stage of the assembly of pre-40S particles within the nucleus and controls their export to the cytoplasm. The sequence is that of Small ribosomal subunit protein uS19B (rps1502) from Schizosaccharomyces pombe (strain 972 / ATCC 24843) (Fission yeast).